The sequence spans 60 residues: Ferredoxin-1 (60 aa).

2 4Fe-4S ferredoxin-type domains span residues 2-27 and 28-60; these read LYIT…SAGD and DIYV…IVQG. [4Fe-4S] cluster contacts are provided by Cys-8, Cys-11, Cys-14, Cys-18, Cys-37, Cys-40, Cys-48, and Cys-52.

[4Fe-4S] cluster serves as cofactor.

Functionally, ferredoxins are iron-sulfur proteins that transfer electrons in a wide variety of metabolic reactions. In Chlorobium limicola, this protein is Ferredoxin-1.